Here is a 310-residue protein sequence, read N- to C-terminus: Homoserine kinase (310 aa).

91 to 101 contributes to the ATP binding site; sequence PIGSGLGSSAC.

Belongs to the GHMP kinase family. Homoserine kinase subfamily.

It localises to the cytoplasm. The catalysed reaction is L-homoserine + ATP = O-phospho-L-homoserine + ADP + H(+). It functions in the pathway amino-acid biosynthesis; L-threonine biosynthesis; L-threonine from L-aspartate: step 4/5. In terms of biological role, catalyzes the ATP-dependent phosphorylation of L-homoserine to L-homoserine phosphate. This Escherichia coli O139:H28 (strain E24377A / ETEC) protein is Homoserine kinase.